The sequence spans 380 residues: Glutamate 5-kinase (380 aa).

Lys-20 provides a ligand contact to ATP. The substrate site is built by Ser-59, Asp-146, and Asn-158. 220-226 (TGGMYSK) lines the ATP pocket. The PUA domain maps to 285-363 (SGTVTVDEGA…HEVAAILGDA (79 aa)).

Belongs to the glutamate 5-kinase family.

It localises to the cytoplasm. It carries out the reaction L-glutamate + ATP = L-glutamyl 5-phosphate + ADP. The protein operates within amino-acid biosynthesis; L-proline biosynthesis; L-glutamate 5-semialdehyde from L-glutamate: step 1/2. Functionally, catalyzes the transfer of a phosphate group to glutamate to form L-glutamate 5-phosphate. The sequence is that of Glutamate 5-kinase from Nitratidesulfovibrio vulgaris (strain ATCC 29579 / DSM 644 / CCUG 34227 / NCIMB 8303 / VKM B-1760 / Hildenborough) (Desulfovibrio vulgaris).